The chain runs to 800 residues: Receptor-like protein 47 (800 aa).

The N-terminal stretch at 1–31 (MMHSSSVRRMITVKWSLCLIFCLTNSILVSA) is a signal peptide. Residues 32-759 (KHLCLPDQKD…QDEDKEEEDQ (728 aa)) are Extracellular-facing. 2 N-linked (GlcNAc...) asparagine glycosylation sites follow: Asn66 and Asn102. 23 LRR repeats span residues 109 to 131 (QHLQKLVLGSNHLSGILPDSIGN), 133 to 156 (KRLKVLVLVNCNLFGKIPSSLGNL), 157 to 179 (SYLTHLDLSYNDFTSEGPDSMGN), 190 to 213 (LSSVTWIDLGDNQLKGMLPSNMSS), 214 to 238 (LSKLEAFDISGNSFSGTIPSSLFMI), 240 to 262 (SLILLHLGRNDFSGPFEIGNISS), 263 to 288 (PSNLQLLNIGRNNFNPDIVDLSIFSP), 294 to 311 (YLDVSGINLKISSTVSLP), 312 to 334 (SPIEYLGLLSCNISEFPKFLRNQ), 335 to 358 (TSLEYLDISANQIEGQVPEWLWSL), 360 to 383 (ELRYVNISHNSFNGFEGPADVIQG), 385 to 406 (RELLVLDISSNIFQDPFPLLPV), 407 to 430 (VSMNYLFSSNNRFSGEIPKTICEL), 431 to 453 (DNLRILVLSNNNFSGSIPRCFEN), 455 to 477 (HLYVLHLRNNNLSGIFPEEAISH), 479 to 500 (LQSFDVGHNLFSGELPKSLINC), 502 to 523 (DIEFLNVEDNRINDTFPSWLEL), 524 to 550 (LPNLQILVLRSNEFYGPIFSPGDSLSF), 551 to 574 (SRLRIFDISENRFTGVLPSDYFVG), 621 to 645 (FTIYKTIDVSGNRLEGDIPESIGLL), 646 to 669 (KEVIVLSMSNNAFTGHIPPSLSNL), 670 to 693 (SNLQSLDLSQNRLSGSIPGELGKL), and 695 to 718 (FLEWMNFSHNRLEGPIPETTQIQT). Residue Asn155 is glycosylated (N-linked (GlcNAc...) asparagine). The N-linked (GlcNAc...) asparagine glycan is linked to Asn210. Asn259 carries N-linked (GlcNAc...) asparagine glycosylation. 2 N-linked (GlcNAc...) asparagine glycosylation sites follow: Asn323 and Asn333. Asn365 carries an N-linked (GlcNAc...) asparagine glycan. Residues Asn442, Asn465, Asn499, and Asn514 are each glycosylated (N-linked (GlcNAc...) asparagine). Asn668 is a glycosylation site (N-linked (GlcNAc...) asparagine). Asn700 carries an N-linked (GlcNAc...) asparagine glycan. Residues 760–780 (VFSWIAAAIGYVPGVVCGLTI) traverse the membrane as a helical segment. Over 781–800 (GHILVSHKRDWFMRIVSFFT) the chain is Cytoplasmic.

It belongs to the RLP family.

The protein resides in the cell membrane. This chain is Receptor-like protein 47, found in Arabidopsis thaliana (Mouse-ear cress).